We begin with the raw amino-acid sequence, 99 residues long: ATP synthase subunit c (99 aa).

Transmembrane regions (helical) follow at residues 23–43 and 78–98; these read GAGI…IGAL and MGIA…LIFV.

This sequence belongs to the ATPase C chain family. F-type ATPases have 2 components, F(1) - the catalytic core - and F(0) - the membrane proton channel. F(1) has five subunits: alpha(3), beta(3), gamma(1), delta(1), epsilon(1). F(0) has three main subunits: a(1), b(2) and c(10-14). The alpha and beta chains form an alternating ring which encloses part of the gamma chain. F(1) is attached to F(0) by a central stalk formed by the gamma and epsilon chains, while a peripheral stalk is formed by the delta and b chains.

The protein resides in the cell membrane. Functionally, f(1)F(0) ATP synthase produces ATP from ADP in the presence of a proton or sodium gradient. F-type ATPases consist of two structural domains, F(1) containing the extramembraneous catalytic core and F(0) containing the membrane proton channel, linked together by a central stalk and a peripheral stalk. During catalysis, ATP synthesis in the catalytic domain of F(1) is coupled via a rotary mechanism of the central stalk subunits to proton translocation. Key component of the F(0) channel; it plays a direct role in translocation across the membrane. A homomeric c-ring of between 10-14 subunits forms the central stalk rotor element with the F(1) delta and epsilon subunits. This chain is ATP synthase subunit c, found in Mycoplasma mobile (strain ATCC 43663 / 163K / NCTC 11711) (Mesomycoplasma mobile).